Consider the following 64-residue polypeptide: Prokaryotic ubiquitin-like protein Pup (64 aa).

The segment covering 1-11 (MAQEQTKRTGG) has biased composition (basic and acidic residues). Residues 1–38 (MAQEQTKRTGGGDEDDTPGGDGAAGQERREKLAEDTDD) form a disordered region. Residues 21–58 (DGAAGQERREKLAEDTDDLLDEIDDVLEENAEDFVRAY) are ARC ATPase binding. The stretch at 24-52 (AGQERREKLAEDTDDLLDEIDDVLEENAE) forms a coiled coil. Glutamine 64 carries the post-translational modification Deamidated glutamine. An Isoglutamyl lysine isopeptide (Gln-Lys) (interchain with K-? in acceptor proteins) cross-link involves residue glutamine 64.

This sequence belongs to the prokaryotic ubiquitin-like protein family. In terms of assembly, strongly interacts with the proteasome-associated ATPase ARC through a hydrophobic interface; the interacting region of Pup lies in its C-terminal half. There is one Pup binding site per ARC hexamer ring. In terms of processing, is modified by deamidation of its C-terminal glutamine to glutamate by the deamidase Dop, a prerequisite to the subsequent pupylation process.

The protein operates within protein degradation; proteasomal Pup-dependent pathway. Functionally, protein modifier that is covalently attached to lysine residues of substrate proteins, thereby targeting them for proteasomal degradation. The tagging system is termed pupylation. In Rhodococcus opacus (strain B4), this protein is Prokaryotic ubiquitin-like protein Pup.